Here is an 819-residue protein sequence, read N- to C-terminus: Mitosis inhibitor protein kinase SWE1 (819 aa).

At serine 36 the chain carries Phosphoserine; by CDC5. Threonine 45 is modified (phosphothreonine; by CDC28). 2 positions are modified to phosphoserine; by CDC28: serine 56 and serine 63. Position 70 is a phosphoserine (serine 70). The residue at position 74 (threonine 74) is a Phosphothreonine; by CDC28. Residues 86–105 (KIEEEEEEEEEGKDEESVDS) form a disordered region. Positions 88 to 102 (EEEEEEEEEGKDEES) are enriched in acidic residues. The residue at position 102 (serine 102) is a Phosphoserine; by CDC5. Serine 105 carries the phosphoserine; by CDC28 modification. At serine 111 the chain carries Phosphoserine; by CDC5, CDC28 and CLA4. A disordered region spans residues 117-168 (ESVTTPITKRSAEKTNSPISLKQWNQRWFPKNDARTENTSSSSSYSVAKPNQ). At serine 118 the chain carries Phosphoserine; by CDC5. Residues 118-142 (SVTTPITKRSAEKTNSPISLKQWNQ) show a composition bias toward polar residues. Phosphothreonine; by CDC28 occurs at positions 121 and 124. Serine 127 carries the post-translational modification Phosphoserine; by CDC28. Threonine 131 bears the Phosphothreonine; by CDC5 mark. Serine 133 is subject to Phosphoserine; by CDC28. Serine 136 carries the phosphoserine; by CDC28 and CLA4 modification. Residues serine 156 and serine 169 each carry the phosphoserine; by CDC5 modification. Residue threonine 196 is modified to Phosphothreonine; by CDC28. The residue at position 201 (serine 201) is a Phosphoserine; by CDC28. 2 positions are modified to phosphoserine; by CDC5: serine 225 and serine 254. Position 262 is a phosphoserine (serine 262). 2 positions are modified to phosphoserine; by CDC28: serine 263 and serine 266. Residues 278–297 (NQTNILSPTNSLVTNSSPQT) form a disordered region. Threonine 280 bears the Phosphothreonine; by CDC5 mark. Phosphoserine occurs at positions 284 and 294. Serine 312 bears the Phosphoserine; by CLA4 mark. The tract at residues 341 to 395 (PIIISSHHSTRKNPQPYQFRGRYDNDTDEEISTPTRRKSIIGATSQTHRESRPLS) is disordered. At serine 345 the chain carries Phosphoserine. Phosphothreonine; by CDC28 occurs at positions 367 and 373. The residue at position 379 (serine 379) is a Phosphoserine; by CDC5 and CLA4. Threonine 384 carries the phosphothreonine; by CDC28 modification. Phosphoserine; by CDC5 and CLA4 occurs at positions 395 and 438. The Protein kinase domain maps to 444 to 794 (FTNVHSIGKG…NQILQTEECL (351 aa)). ATP is bound by residues 450–458 (IGKGQFSTV) and lysine 473. Aspartate 579 acts as the Proton acceptor in catalysis. Residues asparagine 584 and aspartate 597 each contribute to the Mg(2+) site. Serine 610 is subject to Phosphoserine; by CDC5. Threonine 629 is subject to Phosphothreonine; by CDC5. The residue at position 688 (threonine 688) is a Phosphothreonine; by CDC5 and CLA4. The residue at position 692 (threonine 692) is a Phosphothreonine. Positions 707–716 (SNNAGTSTVH) are enriched in polar residues. A disordered region spans residues 707–736 (SNNAGTSTVHNNSNINNPNMNNGNDNNNVN). A compositionally biased stretch (low complexity) spans 717–736 (NNSNINNPNMNNGNDNNNVN). Lysine 741 participates in a covalent cross-link: Glycyl lysine isopeptide (Lys-Gly) (interchain with G-Cter in ubiquitin).

The protein belongs to the protein kinase superfamily. Ser/Thr protein kinase family. WEE1 subfamily. As to quaternary structure, interacts with CLB2-CDC28. Partial hyperphosphorylation of SWE1 by CLB2-CDC28 stabilizes the ternary complex of SWE1 and CLB2-CDC28 and stimulates kinase activity of SWE1 in a positive feedback loop, maintaining CLB2-CDC28 in the tyrosine-phosphorylated state. Fully hyperphosphorylated SWE1 dissociates from CLB2-CDC28. Interacts with HSL7, KCC4 and MET30. Post-translationally, ubiquitinated by the SCF(MET30) complex, leading to its degradation by the proteasome. In terms of processing, phosphorylated progressively by CLA4, CLB2-CDC28 and CDC5. CLA4-dependent phosphorylation occurs in late S phase, followed by phosphorylation by CLB2-CDC28 in early G2, when the levels of mitotic CLB2 increases. This phosphorylation is critical for triggering subsequent SWE1-CDC5 interaction and CDC5-dependent phosphorylation. The resulting cumulative hyperphosphorylation down-regulates SWE1 by targeting it for ubiquitin-mediated degradation. This stepwise phosphorylation is thought to be a mechanism to integrate the different checkpoint requirements before entry into mitosis.

It is found in the bud neck. Its subcellular location is the nucleus. It carries out the reaction L-seryl-[protein] + ATP = O-phospho-L-seryl-[protein] + ADP + H(+). It catalyses the reaction L-threonyl-[protein] + ATP = O-phospho-L-threonyl-[protein] + ADP + H(+). Functionally, protein kinase that acts as a negative regulator of entry into mitosis (G2 to M transition) by phosphorylating and inhibiting the mitosis-promoting cyclin B-bound CDC28 at 'Tyr-19'. SWE1-mediated inhibition of CDC28 acts in a cell size or morphogenesis checkpoint to delay mitosis in response to defects in growth, actin organization or bud formation. Inhibits the activity of B-type cyclins in replication initiation strongly for CLB2, moderately for CLB3 and CLB4, and there is no apparent inhibition for CLB5 and CLB6, correlating with the normal expression timing of those cyclins. Hyperphosphorylation and degradation of SWE1 when all checkpoint requirement are met releases CLB2-CDC28 from inhibition and allows for progression through the cell cycle. SWE1-dependent CDC28 phosphorylation is also required for pachytene arrest upon activation of the recombination checkpoint during meiosis. Also involved in the regulation of nitrogen starvation- and short chain alcohol-induced filamentous growth, or filamentous differentiation in response to slowed DNA synthesis. Can act both on serines and on tyrosines. The polypeptide is Mitosis inhibitor protein kinase SWE1 (SWE1) (Saccharomyces cerevisiae (strain ATCC 204508 / S288c) (Baker's yeast)).